Reading from the N-terminus, the 84-residue chain is Small ribosomal subunit protein uS17 (84 aa).

The protein belongs to the universal ribosomal protein uS17 family. Part of the 30S ribosomal subunit.

Its function is as follows. One of the primary rRNA binding proteins, it binds specifically to the 5'-end of 16S ribosomal RNA. This Clostridium acetobutylicum (strain ATCC 824 / DSM 792 / JCM 1419 / IAM 19013 / LMG 5710 / NBRC 13948 / NRRL B-527 / VKM B-1787 / 2291 / W) protein is Small ribosomal subunit protein uS17.